The sequence spans 142 residues: MSGRGKTGGKARAKAKTRSSRAGLQFPVGRVHRLLRKGNYAERVGAGAPVYLAAVLEYLTAEILELAGNAARDNKKTRIIPRHLQLAVRNDEELNKLLGGVTIAQGGVLPNIQAVLLPKKTGQAAASSGKSGKKGSSQSQEY.

Residues 1 to 22 (MSGRGKTGGKARAKAKTRSSRA) form a disordered region. N-acetylserine is present on S2. S2 is subject to Phosphoserine. Over residues 7 to 19 (TGGKARAKAKTRS) the composition is skewed to basic residues. Residue K10 is modified to N6-lactoyllysine; alternate. Glycyl lysine isopeptide (Lys-Gly) (interchain with G-Cter in ubiquitin) cross-links involve residues K14, K16, and K120. A disordered region spans residues 123–142 (QAAASSGKSGKKGSSQSQEY). Residue S139 is modified to Phosphoserine. Residues 139–140 (SQ) carry the [ST]-Q motif motif. Position 142 is a phosphotyrosine; by WSTF (Y142).

The protein belongs to the histone H2A family. The nucleosome is a histone octamer containing two molecules each of H2A, H2B, H3 and H4 assembled in one H3-H4 heterotetramer and two H2A-H2B heterodimers. The octamer wraps approximately 147 bp of DNA. Interacts with numerous proteins required for DNA damage signaling and repair when phosphorylated on Ser-139. In terms of processing, phosphorylated. Phosphorylation of Ser-139 (H2AX139ph) occurs in response to DNA double strand breaks (DSBs) generated by exogenous genotoxic agents, by stalled replication forks and by meiotic recombination events. Phosphorylation is dependent on the DNA damage checkpoint kinases ATR and ATM, spreads on either side of a detected DSB site and may mark the surrounding chromatin for recruitment of proteins required for DNA damage signaling and repair. Widespread phosphorylation may also serve to amplify the damage signal or aid repair of persistent lesions. Dephosphorylation of Ser-139 is required for DNA DSB repair. Phosphorylation at Tyr-142 (H2AXY142ph) by baz1b/wstf determines the relative recruitment of either DNA repair or pro-apoptotic factors. Phosphorylation at Tyr-142 (H2AXY142ph) favors the recruitment of pro-apoptosis factors. In contrast, dephosphorylation of Tyr-142 by EYA proteins (eya1, eya2, eya3 or eya4) favors the recruitment of MDC1-containing DNA repair complexes to the tail of phosphorylated Ser-139 (H2AX139ph). Phosphorylated by VRK1. Post-translationally, monoubiquitination of Lys-120 (H2AXK119ub) by ring1 and rnf2/ring2 complex gives a specific tag for epigenetic transcriptional repression. Following DNA double-strand breaks (DSBs), it is ubiquitinated through 'Lys-63' linkage of ubiquitin moieties by the E2 ligase ube2n and the E3 ligases rnf8 and rnf168, leading to the recruitment of repair proteins to sites of DNA damage. Ubiquitination at Lys-14 and Lys-16 (H2AK13Ub and H2AK15Ub, respectively) in response to DNA damage is initiated by rnf168 that mediates monoubiquitination at these 2 sites, and 'Lys-63'-linked ubiquitin are then conjugated to monoubiquitin; rnf8 is able to extend 'Lys-63'-linked ubiquitin chains in vitro. H2AK119Ub and ionizing radiation-induced 'Lys-63'-linked ubiquitination (H2AK13Ub and H2AK15Ub) are distinct events.

The protein localises to the nucleus. The protein resides in the chromosome. Variant histone H2A which replaces conventional H2A in a subset of nucleosomes. Nucleosomes wrap and compact DNA into chromatin, limiting DNA accessibility to the cellular machineries which require DNA as a template. Histones thereby play a central role in transcription regulation, DNA repair, DNA replication and chromosomal stability. DNA accessibility is regulated via a complex set of post-translational modifications of histones, also called histone code, and nucleosome remodeling. Required for checkpoint-mediated arrest of cell cycle progression in response to low doses of ionizing radiation and for efficient repair of DNA double strand breaks (DSBs) specifically when modified by C-terminal phosphorylation. This Danio rerio (Zebrafish) protein is Histone H2AX (h2ax).